Consider the following 292-residue polypeptide: Proteasome subunit beta (292 aa).

A propeptide spans 1–62 (removed in mature form; by autocatalysis); that stretch reads MSESLGSVPG…HRAADDIPHG (62 aa). Thr-63 acts as the Nucleophile in catalysis.

It belongs to the peptidase T1B family. The 20S proteasome core is composed of 14 alpha and 14 beta subunits that assemble into four stacked heptameric rings, resulting in a barrel-shaped structure. The two inner rings, each composed of seven catalytic beta subunits, are sandwiched by two outer rings, each composed of seven alpha subunits. The catalytic chamber with the active sites is on the inside of the barrel. Has a gated structure, the ends of the cylinder being occluded by the N-termini of the alpha-subunits. Is capped by the proteasome-associated ATPase, ARC.

It is found in the cytoplasm. It carries out the reaction Cleavage of peptide bonds with very broad specificity.. It participates in protein degradation; proteasomal Pup-dependent pathway. Its activity is regulated as follows. The formation of the proteasomal ATPase ARC-20S proteasome complex, likely via the docking of the C-termini of ARC into the intersubunit pockets in the alpha-rings, may trigger opening of the gate for substrate entry. Interconversion between the open-gate and close-gate conformations leads to a dynamic regulation of the 20S proteasome proteolysis activity. Component of the proteasome core, a large protease complex with broad specificity involved in protein degradation. This Gordonia bronchialis (strain ATCC 25592 / DSM 43247 / BCRC 13721 / JCM 3198 / KCTC 3076 / NBRC 16047 / NCTC 10667) (Rhodococcus bronchialis) protein is Proteasome subunit beta.